A 337-amino-acid chain; its full sequence is Heat-inducible transcription repressor HrcA (337 aa).

This sequence belongs to the HrcA family.

Its function is as follows. Negative regulator of class I heat shock genes (grpE-dnaK-dnaJ and groELS operons). Prevents heat-shock induction of these operons. The sequence is that of Heat-inducible transcription repressor HrcA from Metamycoplasma arthritidis (strain 158L3-1) (Mycoplasma arthritidis).